The following is a 140-amino-acid chain: Nucleoside diphosphate kinase (140 aa).

The ATP site is built by Lys11, Phe59, Arg87, Thr93, Arg104, and Asn114. His117 functions as the Pros-phosphohistidine intermediate in the catalytic mechanism.

Belongs to the NDK family. As to quaternary structure, homotetramer. It depends on Mg(2+) as a cofactor.

The protein localises to the cytoplasm. It catalyses the reaction a 2'-deoxyribonucleoside 5'-diphosphate + ATP = a 2'-deoxyribonucleoside 5'-triphosphate + ADP. The catalysed reaction is a ribonucleoside 5'-diphosphate + ATP = a ribonucleoside 5'-triphosphate + ADP. Major role in the synthesis of nucleoside triphosphates other than ATP. The ATP gamma phosphate is transferred to the NDP beta phosphate via a ping-pong mechanism, using a phosphorylated active-site intermediate. This is Nucleoside diphosphate kinase from Dinoroseobacter shibae (strain DSM 16493 / NCIMB 14021 / DFL 12).